The sequence spans 146 residues: Holo-[acyl-carrier-protein] synthase (146 aa).

Residues Asp9 and Glu63 each contribute to the Mg(2+) site.

The protein belongs to the P-Pant transferase superfamily. AcpS family. Requires Mg(2+) as cofactor.

It localises to the cytoplasm. It catalyses the reaction apo-[ACP] + CoA = holo-[ACP] + adenosine 3',5'-bisphosphate + H(+). Its function is as follows. Transfers the 4'-phosphopantetheine moiety from coenzyme A to a Ser of acyl-carrier-protein. This chain is Holo-[acyl-carrier-protein] synthase, found in Burkholderia ambifaria (strain MC40-6).